The sequence spans 826 residues: Lysine-specific histone demethylase 1B (826 aa).

Basic residues predominate over residues 1-11 (MAASRGRSKKR). The disordered stretch occupies residues 1-46 (MAASRGRSKKRSNLELSPDNLPLRSSGRQAKKKAVEIPDEDEDGSS). Phosphoserine is present on residues serine 17 and serine 26. 12 residues coordinate Zn(2+): cysteine 53, cysteine 58, cysteine 65, cysteine 73, histidine 84, histidine 90, cysteine 92, cysteine 95, cysteine 142, cysteine 147, cysteine 169, and cysteine 185. Residues 133 to 193 (DQQLPYWVQC…HCSFPEDLRV (61 aa)) form a CW-type zinc finger. A Phosphoserine modification is found at serine 253. Residues 279–298 (YQPNECGKALCVRPDVMELD) form a GLYR1-binding region. In terms of domain architecture, SWIRM spans 281–379 (PNECGKALCV…TGVLTVAAGQ (99 aa)). FAD is bound at residue 389 to 445 (KSVLVVGAGPAGLAAARQLHNFGMKVTVLEAKDRIGGRVWDDKSFKGVVVGRGPQIV). 3 histone H3-binding regions span residues 444-473 (IVNG…RCDL), 493-504 (FNALLDVVSEWR), and 544-578 (FHLS…AGDH). A GLYR1-binding region spans residues 570 to 572 (FFA). Residues valine 604, glutamate 799, and 807–809 (QTV) each bind FAD. Positions 802-818 (NRHFPQTVTGAYLSGVR) are GLYR1-binding.

It belongs to the flavin monoamine oxidase family. Interacts with its cofactor GLYR1 at nucleosomes; this interaction stimulates H3K4me1 and H3K4me2 demethylation. In contrast to KDM1A, does not form a complex with RCOR1/CoREST. Possible accessory component of the polycomb repressive deubiquitinase (PR-DUB) complex, at least composed of BAP1, one of ASXL1, ASXL2 or (probably) ASXL3 and one of MBD5 or MBD6. The PR-DUB core associates with a number of accessory proteins, including FOXK1, FOXK2, KDM1B, HCFC1 and OGT; KDM1B specifically associates with ASXL2 PR-DUB complexes. Requires FAD as cofactor. Zn(2+) serves as cofactor. In terms of tissue distribution, expressed in growing oocytes and in intestinal gland.

The protein resides in the nucleus. The protein localises to the chromosome. It catalyses the reaction N(6),N(6)-dimethyl-L-lysyl(4)-[histone H3] + 2 A + 2 H2O = L-lysyl(4)-[histone H3] + 2 formaldehyde + 2 AH2. The catalysed reaction is N(6)-methyl-L-lysyl(4)-[histone H3] + A + H2O = L-lysyl(4)-[histone H3] + formaldehyde + AH2. Its activity is regulated as follows. Inhibited by tranylcypromine, but not by pargyline, deprenyl or rasagiline. Histone H3K4me1 and H3K4me2 demethylase activity is inhibited by DNA, this inhibition is released in complex with GLYR1. Functionally, histone demethylase that demethylates 'Lys-4' of histone H3, a specific tag for epigenetic transcriptional activation, thereby acting as a corepressor. Required for de novo DNA methylation of a subset of imprinted genes during oogenesis. Acts by oxidizing the substrate by FAD to generate the corresponding imine that is subsequently hydrolyzed. Demethylates both mono- and di-methylated 'Lys-4' of histone H3. Has no effect on tri-methylated 'Lys-4', mono-, di- or tri-methylated 'Lys-9', mono-, di- or tri-methylated 'Lys-27', mono-, di- or tri-methylated 'Lys-36' of histone H3, or on mono-, di- or tri-methylated 'Lys-20' of histone H4. In terms of biological role, histone demethylase that demethylates 'Lys-4' of histone H3, a specific tag for epigenetic transcriptional activation, thereby acting as a corepressor. Required for de novo DNA methylation of a subset of imprinted genes during oogenesis. Acts by oxidizing the substrate by FAD to generate the corresponding imine that is subsequently hydrolyzed. Demethylates both mono- and di-methylated 'Lys-4' of histone H3. Has no effect on tri-methylated 'Lys-4', mono-, di- or tri-methylated 'Lys-9', mono-, di- or tri-methylated 'Lys-27', mono-, di- or tri-methylated 'Lys-36' of histone H3, or on mono-, di- or tri-methylated 'Lys-20' of histone H4. Alone, it is unable to demethylate H3K4me on nucleosomes and requires the presence of GLYR1 to achieve such activity, they form a multifunctional enzyme complex that modifies transcribed chromatin and facilitates Pol II transcription through nucleosomes. The chain is Lysine-specific histone demethylase 1B from Mus musculus (Mouse).